We begin with the raw amino-acid sequence, 438 residues long: UDP-N-acetylmuramoylalanine--D-glutamate ligase (438 aa).

112–118 (GSNGKST) serves as a coordination point for ATP.

Belongs to the MurCDEF family.

It localises to the cytoplasm. The catalysed reaction is UDP-N-acetyl-alpha-D-muramoyl-L-alanine + D-glutamate + ATP = UDP-N-acetyl-alpha-D-muramoyl-L-alanyl-D-glutamate + ADP + phosphate + H(+). It participates in cell wall biogenesis; peptidoglycan biosynthesis. Functionally, cell wall formation. Catalyzes the addition of glutamate to the nucleotide precursor UDP-N-acetylmuramoyl-L-alanine (UMA). In Salmonella typhimurium (strain LT2 / SGSC1412 / ATCC 700720), this protein is UDP-N-acetylmuramoylalanine--D-glutamate ligase.